The following is a 107-amino-acid chain: Probable monothiol glutaredoxin 2 (107 aa).

A Glutaredoxin domain is found at 7–107 (LEFIQNAIKK…LEKMLKDVVV (101 aa)). Lysine 24 is a binding site for glutathione. [2Fe-2S] cluster is bound at residue cysteine 32. Residues arginine 61, phenylalanine 73, and 86 to 87 (CD) each bind glutathione.

Belongs to the glutaredoxin family. Monothiol subfamily.

The protein is Probable monothiol glutaredoxin 2 (grxC2) of Rickettsia prowazekii (strain Madrid E).